We begin with the raw amino-acid sequence, 376 residues long: Chaperone protein DnaJ (376 aa).

The J domain occupies 5–70 (DYYEILGVSK…QKRAAYDQYG (66 aa)). The CR-type zinc finger occupies 131–209 (GVTKEIRIPT…CHGHGRVERS (79 aa)). Zn(2+) is bound by residues cysteine 144, cysteine 147, cysteine 161, cysteine 164, cysteine 183, cysteine 186, cysteine 197, and cysteine 200. CXXCXGXG motif repeat units lie at residues 144-151 (CDVCHGSG), 161-168 (CPTCHGSG), 183-190 (CPHCQGRG), and 197-204 (CNKCHGHG).

It belongs to the DnaJ family. As to quaternary structure, homodimer. It depends on Zn(2+) as a cofactor.

The protein localises to the cytoplasm. In terms of biological role, participates actively in the response to hyperosmotic and heat shock by preventing the aggregation of stress-denatured proteins and by disaggregating proteins, also in an autonomous, DnaK-independent fashion. Unfolded proteins bind initially to DnaJ; upon interaction with the DnaJ-bound protein, DnaK hydrolyzes its bound ATP, resulting in the formation of a stable complex. GrpE releases ADP from DnaK; ATP binding to DnaK triggers the release of the substrate protein, thus completing the reaction cycle. Several rounds of ATP-dependent interactions between DnaJ, DnaK and GrpE are required for fully efficient folding. Also involved, together with DnaK and GrpE, in the DNA replication of plasmids through activation of initiation proteins. The protein is Chaperone protein DnaJ of Shigella flexneri serotype 5b (strain 8401).